A 269-amino-acid chain; its full sequence is 4-hydroxy-tetrahydrodipicolinate reductase (269 aa).

Residues 8–13 and Glu-34 contribute to the NAD(+) site; that span reads GAAGRM. Arg-35 contributes to the NADP(+) binding site. Residues 98-100 and 122-125 each bind NAD(+); these read GTT and APNY. The active-site Proton donor/acceptor is the His-155. Residue His-156 coordinates (S)-2,3,4,5-tetrahydrodipicolinate. Lys-159 acts as the Proton donor in catalysis. A (S)-2,3,4,5-tetrahydrodipicolinate-binding site is contributed by 165 to 166; the sequence is GT.

It belongs to the DapB family.

It localises to the cytoplasm. The enzyme catalyses (S)-2,3,4,5-tetrahydrodipicolinate + NAD(+) + H2O = (2S,4S)-4-hydroxy-2,3,4,5-tetrahydrodipicolinate + NADH + H(+). It carries out the reaction (S)-2,3,4,5-tetrahydrodipicolinate + NADP(+) + H2O = (2S,4S)-4-hydroxy-2,3,4,5-tetrahydrodipicolinate + NADPH + H(+). Its pathway is amino-acid biosynthesis; L-lysine biosynthesis via DAP pathway; (S)-tetrahydrodipicolinate from L-aspartate: step 4/4. In terms of biological role, catalyzes the conversion of 4-hydroxy-tetrahydrodipicolinate (HTPA) to tetrahydrodipicolinate. The chain is 4-hydroxy-tetrahydrodipicolinate reductase from Vibrio atlanticus (strain LGP32) (Vibrio splendidus (strain Mel32)).